Consider the following 121-residue polypeptide: Copper transport protein CCH (121 aa).

N-acetylalanine is present on Ala2. Residues 2 to 65 (AQTVVLKVGM…TVSKTGKKTS (64 aa)) enclose the HMA domain. Residues Cys13 and Cys16 each contribute to the Cu cation site. The disordered stretch occupies residues 70–121 (EAEAEPKAEADPKVETVTETKTEAETKTEAKVDAKADVEPKAAEAETKPSQV). The segment covering 73–121 (AEPKAEADPKVETVTETKTEAETKTEAKVDAKADVEPKAAEAETKPSQV) has biased composition (basic and acidic residues).

This sequence belongs to the ATX1 family. Cu cation serves as cofactor. In terms of tissue distribution, expressed in phloem (at protein level).

Involved in copper homeostasis. Can complement the yeast mutants atx1 and sod1. The sequence is that of Copper transport protein CCH (CCH) from Arabidopsis thaliana (Mouse-ear cress).